The sequence spans 1259 residues: Zinc finger protein BRUTUS-like At1g74770 (1259 aa).

Residues 441 to 461 traverse the membrane as a helical segment; that stretch reads LLYTSIHVLPLGLLKCVILWF. 2 stretches are compositionally biased toward basic and acidic residues: residues 904–916 and 924–934; these read KEEK…ESKK and EGDKEQTDKMS. Residues 904 to 938 are disordered; sequence KEEKDLERSESKKICRGSNQEGDKEQTDKMSQKVS. The segment at 1018 to 1087 adopts a CHY-type zinc-finger fold; it reads PHSLIFGCNH…ANCSNTSCKS (70 aa). Residues cysteine 1025, histidine 1027, cysteine 1038, cysteine 1039, cysteine 1045, cysteine 1048, histidine 1049, histidine 1055, cysteine 1067, cysteine 1070, cysteine 1080, cysteine 1085, cysteine 1094, cysteine 1097, histidine 1108, cysteine 1109, cysteine 1112, cysteine 1115, histidine 1127, cysteine 1128, cysteine 1131, cysteine 1134, histidine 1142, and cysteine 1144 each contribute to the Zn(2+) site. The CTCHY-type zinc finger occupies 1089–1152; the sequence is MGKYFCKICK…VCREKCLEDN (64 aa). The RING-type; atypical zinc-finger motif lies at 1153–1195; sequence CPICHEYIFTSSSPVKALPCGHLMHSTCFQEYTCSHYTCPVCS.

Binds zinc and iron ions.

It localises to the membrane. Its subcellular location is the nucleus. It functions in the pathway protein modification; protein ubiquitination. In terms of biological role, probable E3 ubiquitin-protein ligase that may regulate the response to iron deficiency and thus contributes to iron homeostasis. This Arabidopsis thaliana (Mouse-ear cress) protein is Zinc finger protein BRUTUS-like At1g74770.